A 166-amino-acid polypeptide reads, in one-letter code: NAD(P)H-quinone oxidoreductase subunit I, chloroplastic (166 aa).

4Fe-4S ferredoxin-type domains lie at 55–84 (GRIH…VDWK) and 95–124 (LNYS…MTEE). [4Fe-4S] cluster is bound by residues cysteine 64, cysteine 67, cysteine 70, cysteine 74, cysteine 104, cysteine 107, cysteine 110, and cysteine 114.

This sequence belongs to the complex I 23 kDa subunit family. NDH is composed of at least 16 different subunits, 5 of which are encoded in the nucleus. [4Fe-4S] cluster serves as cofactor.

The protein resides in the plastid. The protein localises to the chloroplast thylakoid membrane. It catalyses the reaction a plastoquinone + NADH + (n+1) H(+)(in) = a plastoquinol + NAD(+) + n H(+)(out). It carries out the reaction a plastoquinone + NADPH + (n+1) H(+)(in) = a plastoquinol + NADP(+) + n H(+)(out). NDH shuttles electrons from NAD(P)H:plastoquinone, via FMN and iron-sulfur (Fe-S) centers, to quinones in the photosynthetic chain and possibly in a chloroplast respiratory chain. The immediate electron acceptor for the enzyme in this species is believed to be plastoquinone. Couples the redox reaction to proton translocation, and thus conserves the redox energy in a proton gradient. The sequence is that of NAD(P)H-quinone oxidoreductase subunit I, chloroplastic from Oblivia mikanioides (Salmea mikanioides).